The following is a 561-amino-acid chain: Asparagine synthetase [glutamine-hydrolyzing] (561 aa).

The active-site For GATase activity is the C2. The region spanning 2–191 (CGIWALFGSD…PGHYEVLDLK (190 aa)) is the Glutamine amidotransferase type-2 domain. L-glutamine-binding positions include 49 to 53 (RLAVV), 75 to 77 (NGE), and D97. In terms of domain architecture, Asparagine synthetase spans 213–536 (HALYDNVEKL…PGRADWLSHY (324 aa)). Residues L256, I288, and 363 to 364 (SG) each bind ATP. N6-acetyllysine is present on K385. T545 carries the post-translational modification Phosphothreonine. The residue at position 557 (S557) is a Phosphoserine.

The catalysed reaction is L-aspartate + L-glutamine + ATP + H2O = L-asparagine + L-glutamate + AMP + diphosphate + H(+). It functions in the pathway amino-acid biosynthesis; L-asparagine biosynthesis; L-asparagine from L-aspartate (L-Gln route): step 1/1. This chain is Asparagine synthetase [glutamine-hydrolyzing] (ASNS), found in Homo sapiens (Human).